The sequence spans 86 residues: Mu-theraphotoxin-Hhn1d (86 aa).

The N-terminal stretch at 1–21 (MKASMFLALAGLALLFVVCYA) is a signal peptide. Positions 22–49 (SESEEKEFSNELLSSVLAVDDNSKGEER) are excised as a propeptide. 3 cysteine pairs are disulfide-bonded: C51-C66, C58-C73, and C65-C80. Position 84 is an isoleucine amide (I84).

This sequence belongs to the neurotoxin 10 (Hwtx-1) family. 22 (Htx-4) subfamily. In terms of assembly, monomer. Expressed by the venom gland.

The protein localises to the secreted. Its function is as follows. Neurotoxin. Selectively blocks neuronal tetrodotoxin-sensitive voltage-gated sodium channels (Nav). Does not affect tetrodotoxin-resistant voltage-gated sodium channels or calcium channels. The polypeptide is Mu-theraphotoxin-Hhn1d (Cyriopagopus hainanus (Chinese bird spider)).